Consider the following 541-residue polypeptide: Protein wntless homolog (541 aa).

Residues 1–15 (MAGAIIENMSTKKLC) are Cytoplasmic-facing. The helical transmembrane segment at 16–36 (IVGGILLVFQIVAFLVGGLIA) threads the bilayer. Over 37–232 (PAPTTAVSYV…GIHQNGGFTK (196 aa)) the chain is Lumenal. Residues 101–202 (MEMSPWFQFM…KYYLLNIRLP (102 aa)) form an interaction with Wnt proteins region. Residues 233-253 (VWFAMKTFLTPSIFIIMVWYW) form a helical membrane-spanning segment. Over 254-268 (RRITMMSRPPVLLEK) the chain is Cytoplasmic. The helical transmembrane segment at 269-289 (VIFALGISMTFINIPVEWFSI) threads the bilayer. Residues 290–303 (GFDWTWMLLFGDIR) are Lumenal-facing. Residues 304–324 (QGIFYAMLLSFWIIFCGEHMM) traverse the membrane as a helical segment. At 325-331 (DQHERNH) the chain is on the cytoplasmic side. Residues 332-352 (IAGYWKQVGPIAVGSFCLFIF) form a helical membrane-spanning segment. The Lumenal segment spans residues 353–380 (DMCERGVQLTNPFYSIWTTDVGTELAMA). A helical membrane pass occupies residues 381-401 (FIIVAGICLCLYFLFLCFMVF). The Cytoplasmic segment spans residues 402 to 431 (QVFRNISGKQSSLPAMSKVRRLHYEGLIFR). The chain crosses the membrane as a helical span at residues 432–452 (FKFLMLITLACAAMTVIFFIV). At 453 to 471 (SQVTEGHWKWGGVTVQVSS) the chain is on the lumenal side. The chain crosses the membrane as a helical span at residues 472-492 (AFFTGIYGMWNLYVFALMFLY). Topologically, residues 493–541 (APSHKNYGEDQSNGDLGVHSGEELQLTTTITHVDGPTEIYKLTRKEAQE) are cytoplasmic.

Belongs to the wntless family. In terms of assembly, interacts with WNT3A. Interacts with WNT1, WNT3 and WNT5A. N-glycosylated. In terms of tissue distribution, expressed in the brain, skeletal muscle, heart muscle, lung, gut, liver, and kidney (at protein level). In the brain, expressed in the cortex, striatum, ventral tegmentum, nucleus accumbens and to a lesser extent in the Purkinjie cells in the cerebellum. Expressed in eye iridocorneal angle.

It is found in the golgi apparatus membrane. It localises to the cytoplasmic vesicle membrane. The protein resides in the cell membrane. The protein localises to the endoplasmic reticulum membrane. Its subcellular location is the early endosome membrane. Regulates Wnt proteins sorting and secretion in a feedback regulatory mechanism. This reciprocal interaction plays a key role in the regulation of expression, subcellular location, binding and organelle-specific association of Wnt proteins. Also plays an important role in establishment of the anterior-posterior body axis formation during development. The chain is Protein wntless homolog (Wls) from Rattus norvegicus (Rat).